A 190-amino-acid chain; its full sequence is Holliday junction branch migration complex subunit RuvA (190 aa).

The domain I stretch occupies residues 1 to 64 (MIGRITGTLI…EDAHILYGFA (64 aa)). Positions 65–137 (TAAERGAFRE…MRGKLGADIG (73 aa)) are domain II. The tract at residues 137–141 (GATAH) is flexible linker. The segment at 142-190 (AVPDSQTDILNALLALGYSDKESQAALKKLPEGTGVSEGIRLALKALVR) is domain III.

It belongs to the RuvA family. In terms of assembly, homotetramer. Forms an RuvA(8)-RuvB(12)-Holliday junction (HJ) complex. HJ DNA is sandwiched between 2 RuvA tetramers; dsDNA enters through RuvA and exits via RuvB. An RuvB hexamer assembles on each DNA strand where it exits the tetramer. Each RuvB hexamer is contacted by two RuvA subunits (via domain III) on 2 adjacent RuvB subunits; this complex drives branch migration. In the full resolvosome a probable DNA-RuvA(4)-RuvB(12)-RuvC(2) complex forms which resolves the HJ.

The protein localises to the cytoplasm. The RuvA-RuvB-RuvC complex processes Holliday junction (HJ) DNA during genetic recombination and DNA repair, while the RuvA-RuvB complex plays an important role in the rescue of blocked DNA replication forks via replication fork reversal (RFR). RuvA specifically binds to HJ cruciform DNA, conferring on it an open structure. The RuvB hexamer acts as an ATP-dependent pump, pulling dsDNA into and through the RuvAB complex. HJ branch migration allows RuvC to scan DNA until it finds its consensus sequence, where it cleaves and resolves the cruciform DNA. This is Holliday junction branch migration complex subunit RuvA from Bordetella petrii (strain ATCC BAA-461 / DSM 12804 / CCUG 43448).